Reading from the N-terminus, the 186-residue chain is ATP synthase subunit b, chloroplastic (186 aa).

The helical transmembrane segment at 27–43 (IFETNILNLAVVLGILL) threads the bilayer.

It belongs to the ATPase B chain family. In terms of assembly, F-type ATPases have 2 components, F(1) - the catalytic core - and F(0) - the membrane proton channel. F(1) has five subunits: alpha(3), beta(3), gamma(1), delta(1), epsilon(1). F(0) has four main subunits: a(1), b(1), b'(1) and c(10-14). The alpha and beta chains form an alternating ring which encloses part of the gamma chain. F(1) is attached to F(0) by a central stalk formed by the gamma and epsilon chains, while a peripheral stalk is formed by the delta, b and b' chains.

It localises to the plastid. The protein localises to the chloroplast thylakoid membrane. F(1)F(0) ATP synthase produces ATP from ADP in the presence of a proton or sodium gradient. F-type ATPases consist of two structural domains, F(1) containing the extramembraneous catalytic core and F(0) containing the membrane proton channel, linked together by a central stalk and a peripheral stalk. During catalysis, ATP synthesis in the catalytic domain of F(1) is coupled via a rotary mechanism of the central stalk subunits to proton translocation. In terms of biological role, component of the F(0) channel, it forms part of the peripheral stalk, linking F(1) to F(0). This is ATP synthase subunit b, chloroplastic from Mesostigma viride (Green alga).